The primary structure comprises 539 residues: G protein-coupled receptor associated sorting protein 3 (539 aa).

Over residues 1 to 10 (MTGSKNKARA) the composition is skewed to basic residues. Disordered regions lie at residues 1–112 (MTGS…NWFW) and 134–172 (VAKC…EENV). 2 stretches are compositionally biased toward basic and acidic residues: residues 66 to 80 (VVAE…ESKA) and 88 to 106 (FNHR…DKPS). Residues 134–146 (VAKCENKPSTSIQ) show a composition bias toward polar residues.

It belongs to the GPRASP family. In terms of assembly, homodimer.

Its subcellular location is the cytoplasm. The protein localises to the nucleus. Survival and differentiation promoting protein that plays a role in the regulation of neurosynaptogenesis. Induces phosphatase PP2A activity which results in APP dephosphorylation and inhibits BACE1-mediated processing of APP. The protein is G protein-coupled receptor associated sorting protein 3 (Gprasp3) of Mus musculus (Mouse).